An 884-amino-acid polypeptide reads, in one-letter code: Cadherin-1 (884 aa).

Positions 1–23 (MGARCRSFSALLLLLQVSSWLCQ) are cleaved as a signal peptide. A propeptide spanning residues 24–156 (ELEPESCSPG…VYPGLRRQKR (133 aa)) is cleaved from the precursor. Residues 119 to 139 (KSMGHHHHRHHHRDPASESNP) are disordered. Basic residues predominate over residues 121 to 131 (MGHHHHRHHHR). 5 Cadherin domains span residues 157–264 (DWVI…RPEF), 265–377 (TQEV…APVF), 378–488 (NPST…APIF), 489–595 (MPAE…DNAP), and 596–699 (IPEP…NCMK). The Extracellular portion of the chain corresponds to 157–709 (DWVIPPISCP…AGIVAAGLQV (553 aa)). D259 lines the Ca(2+) pocket. O-linked (Man...) serine glycans are attached at residues S282 and S287. D290 lines the Ca(2+) pocket. T360, T472, T474, and T511 each carry an O-linked (Man...) threonine glycan. A glycan (N-linked (GlcNAc...) asparagine) is linked at N560. Residues T578, T580, and T582 are each glycosylated (O-linked (Man...) threonine). An N-linked (GlcNAc...) asparagine glycan is attached at N639. Residues 710 to 733 (PAILGILGGILALLILILLLLLFL) traverse the membrane as a helical segment. Residues 734-884 (RRRTVVKEPL…ADMYGGGEDD (151 aa)) lie on the Cytoplasmic side of the membrane. Residues 749–808 (DTRDNVYYYDEEGGGEEDQDFDLSQLHRGLDARPEVTRNDVAPTLMSVPQYRPRPANPDE) are disordered. Phosphotyrosine; by SRC is present on residues Y755, Y756, and Y757. Residues 757 to 769 (YDEEGGGEEDQDF) are compositionally biased toward acidic residues. Residues 760 to 771 (EGGGEEDQDFDL) are required for binding CTNND1 and PSEN1. A Phosphoserine modification is found at S772. Residues 776–786 (RGLDARPEVTR) are compositionally biased toward basic and acidic residues. Phosphoserine is present on residues S795, S840, S842, and S848. The segment at 813-884 (IDENLKAADS…ADMYGGGEDD (72 aa)) is required for binding alpha, beta and gamma catenins.

In terms of assembly, homodimer; disulfide-linked. Component of an E-cadherin/ catenin adhesion complex composed of at least E-cadherin/CDH1, beta-catenin/CTNNB1 or gamma-catenin/JUP, and potentially alpha-catenin/CTNNA1; the complex is located to adherens junctions. Found in a complex composed of CDH1, RAP1A and PKP3; PKP3 acts as a scaffold protein within the complex, the complex is required for CDH1 localization to mature desmosome cell junctions. Interacts with the TRPV4 and CTNNB1 complex. Interacts with CTNND1. The stable association of CTNNA1 is controversial as CTNNA1 was shown not to bind to F-actin when assembled in the complex. Alternatively, the CTNNA1-containing complex may be linked to F-actin by other proteins such as LIMA1. Interaction with PSEN1, cleaves CDH1 resulting in the disassociation of cadherin-based adherens junctions (CAJs). Interacts with AJAP1 and DLGAP5. Interacts with TBC1D2. Interacts with LIMA1. Interacts with CAV1. Interacts with PIP5K1C. Interacts with RAB8B. Interacts with DDR1; this stabilizes CDH1 at the cell surface and inhibits its internalization. Interacts with RAPGEF2. Interacts with KLRG1. Forms a ternary complex composed of ADAM10, CADH1 and EPHA4; within the complex, CADH1 is cleaved by ADAM10 which disrupts adherens junctions. Interacts with SPEF1. Interacts with CTNNB1 and PKP2. Interacts with AMOTL2; the interaction may facilitate binding of radial actin fibers to cell junction complexes. Interacts with DSG3; the interaction is required for CDH1 localization to developing adherens junctions. During apoptosis or with calcium influx, cleaved by a membrane-bound metalloproteinase (ADAM10), PS1/gamma-secretase and caspase-3. Processing by the metalloproteinase, induced by calcium influx, causes disruption of cell-cell adhesion and the subsequent release of beta-catenin into the cytoplasm. The residual membrane-tethered cleavage product is rapidly degraded via an intracellular proteolytic pathway. Cleavage by caspase-3 releases the cytoplasmic tail resulting in disintegration of the actin microfilament system. The gamma-secretase-mediated cleavage promotes disassembly of adherens junctions. During development of the cochlear organ of Corti, cleavage by ADAM10 at adherens junctions promotes pillar cell separation. Post-translationally, O-glycosylated. O-manosylated by TMTC1, TMTC2, TMTC3 or TMTC4. Ser-287 and Thr-511 are O-manosylated by TMTC2 or TMTC4 but not TMTC1 or TMTC3. In terms of processing, N-glycosylation at Asn-639 is essential for expression, folding and trafficking. Addition of bisecting N-acetylglucosamine by MGAT3 modulates its cell membrane location. Ubiquitinated by a SCF complex containing SKP2, which requires prior phosphorylation by CK1/CSNK1A1. Ubiquitinated by CBLL1/HAKAI, requires prior phosphorylation at Tyr-756. Expressed in inner and outer pillar cells of the organ of Corti (at protein level). Expressed in granuloma macrophages (at protein level). Expressed in the epidermal keratinocytes of the skin from birth (at protein level). Expressed in non-neural epithelial tissues.

The protein localises to the cell junction. It is found in the adherens junction. It localises to the cell membrane. Its subcellular location is the endosome. The protein resides in the golgi apparatus. The protein localises to the trans-Golgi network. It is found in the cytoplasm. It localises to the desmosome. In terms of biological role, cadherins are calcium-dependent cell adhesion proteins. They preferentially interact with themselves in a homophilic manner in connecting cells; cadherins may thus contribute to the sorting of heterogeneous cell types. CDH1 is involved in mechanisms regulating cell-cell adhesions, mobility and proliferation of epithelial cells. Promotes organization of radial actin fiber structure and cellular response to contractile forces, via its interaction with AMOTL2 which facilitates anchoring of radial actin fibers to CDH1 junction complexes at the cell membrane. Plays a role in the early stages of desmosome cell-cell junction formation via facilitating the recruitment of DSG2 and DSP to desmosome plaques. Has a potent invasive suppressor role. It is a ligand for integrin alpha-E/beta-7. Its function is as follows. E-Cad/CTF2 promotes non-amyloidogenic degradation of Abeta precursors. Has a strong inhibitory effect on APP C99 and C83 production. (Microbial infection) Does not function as a receptor for L.monocytogenes internalin A (InlA); mutating a single surface-exposed residue confers receptor activity to this protein and promotes uptake of the bacteria. In Mus musculus (Mouse), this protein is Cadherin-1 (Cdh1).